A 430-amino-acid chain; its full sequence is Protein translocase subunit SecY (430 aa).

Helical transmembrane passes span 18 to 38, 68 to 88, 117 to 137, 148 to 168, 179 to 199, 215 to 235, 270 to 290, 308 to 328, 368 to 388, and 390 to 410; these read IFFTLAMLVIFKIGTYIPAPG, FSIFAMGIMPYITASIVMQLL, FAIILAFIQSIGMAFQFNNYL, MSYLLIAIVLTTGTAFLLWLG, GISIIIFAGILSTLPSSLIQF, LQVAGLVIGLVLLTMGAVYVL, VIPVIFAMAFFLLPRTLTMFF, NIGMVIYIILIIAFTYFYAFV, FVGSIFLAVIAILPILATKFM, and LPQSIQVGGTSLLIVIGVAIE.

It belongs to the SecY/SEC61-alpha family. Component of the Sec protein translocase complex. Heterotrimer consisting of SecY, SecE and SecG subunits. The heterotrimers can form oligomers, although 1 heterotrimer is thought to be able to translocate proteins. Interacts with the ribosome. Interacts with SecDF, and other proteins may be involved. Interacts with SecA.

Its subcellular location is the cell membrane. The central subunit of the protein translocation channel SecYEG. Consists of two halves formed by TMs 1-5 and 6-10. These two domains form a lateral gate at the front which open onto the bilayer between TMs 2 and 7, and are clamped together by SecE at the back. The channel is closed by both a pore ring composed of hydrophobic SecY resides and a short helix (helix 2A) on the extracellular side of the membrane which forms a plug. The plug probably moves laterally to allow the channel to open. The ring and the pore may move independently. The polypeptide is Protein translocase subunit SecY (Staphylococcus carnosus (strain TM300)).